The following is a 402-amino-acid chain: Guanine nucleotide-binding protein subunit alpha-1 (402 aa).

The span at 1–12 (MGCSASKPSEPS) shows a compositional bias: polar residues. The disordered stretch occupies residues 1-70 (MGCSASKPSE…PEPQKPAEPA (70 aa)). Glycine 2 is lipidated: N-myristoyl glycine. Cysteine 3 carries S-palmitoyl cysteine lipidation. Basic and acidic residues predominate over residues 23 to 33 (KKVEQVPEPKP). A compositionally biased stretch (pro residues) spans 34 to 69 (EPQPQPEPQPQPEPPKPAEPAPAPAPAPEPQKPAEP). One can recognise a G-alpha domain in the interval 82 to 402 (EAYGLLLCGA…FISDKYYQDA (321 aa)). Residues 85 to 98 (GLLLCGAGESGKTT) form a G1 motif region. The GTP site is built by glutamate 93, serine 94, glycine 95, lysine 96, threonine 97, threonine 98, aspartate 198, leucine 223, serine 229, glycine 251, asparagine 317, lysine 318, aspartate 320, and alanine 377. Threonine 97 contributes to the Mg(2+) binding site. Residues 221 to 229 (DVLRARIRS) are G2 motif. Mg(2+) is bound at residue serine 229. Residues 244-253 (IRIFDVGGQK) are G3 motif. The G4 motif stretch occupies residues 313 to 320 (FLVCNKFD). Residues 375-380 (IVALNG) form a G5 motif region.

It belongs to the G-alpha family. In terms of assembly, g proteins are composed of 3 units; alpha, beta and gamma. The alpha chain contains the guanine nucleotide binding site. Requires Mg(2+) as cofactor.

Its subcellular location is the cytoplasm. It is found in the perinuclear region. It localises to the endomembrane system. Its function is as follows. Guanine nucleotide-binding proteins (G proteins) are involved as modulators or transducers in various transmembrane signaling systems. The protein is Guanine nucleotide-binding protein subunit alpha-1 (GA1) of Trichomonas vaginalis.